The sequence spans 96 residues: Small cysteine and glycine repeat-containing protein 7 (96 aa).

Positions 4-80 (CGCGSCGGCG…TCGSCGCGCG (77 aa)) are 14 X 2 AA repeats of CG.

This sequence belongs to the KRTAP type 28 family.

In terms of biological role, in the hair cortex, hair keratin intermediate filaments are embedded in an interfilamentous matrix, consisting of hair keratin-associated proteins (KRTAP), which are essential for the formation of a rigid and resistant hair shaft through their extensive disulfide bond cross-linking with abundant cysteine residues of hair keratins. The matrix proteins include the high-sulfur and high-glycine-tyrosine keratins. The sequence is that of Small cysteine and glycine repeat-containing protein 7 from Homo sapiens (Human).